Consider the following 388-residue polypeptide: DNA primase small subunit PriS (388 aa).

Residues D100, D102, and D288 contribute to the active site.

This sequence belongs to the eukaryotic-type primase small subunit family. Heterodimer of a small subunit (PriS) and a large subunit (PriL). The cofactor is Mg(2+). Requires Mn(2+) as cofactor.

Its function is as follows. Catalytic subunit of DNA primase, an RNA polymerase that catalyzes the synthesis of short RNA molecules used as primers for DNA polymerase during DNA replication. The small subunit contains the primase catalytic core and has DNA synthesis activity on its own. Binding to the large subunit stabilizes and modulates the activity, increasing the rate of DNA synthesis while decreasing the length of the DNA fragments, and conferring RNA synthesis capability. The DNA polymerase activity may enable DNA primase to also catalyze primer extension after primer synthesis. May also play a role in DNA repair. The chain is DNA primase small subunit PriS from Methanospirillum hungatei JF-1 (strain ATCC 27890 / DSM 864 / NBRC 100397 / JF-1).